An 899-amino-acid polypeptide reads, in one-letter code: Protein argonaute (899 aa).

A disordered region spans residues 107-129 (TQKPKRRGGRAGGMRGNRGGPST). The span at 116–125 (RAGGMRGNRG) shows a compositional bias: gly residues. The PAZ domain occupies 229–313 (SMCELLNENR…KQDDYCNSVL (85 aa)). The Piwi domain occupies 555 to 878 (LVVVVIPGPK…LSKFCGEILG (324 aa)).

This sequence belongs to the argonaute family. Ago subfamily. In terms of assembly, interacts with miR2. Highly specific binding to the mRNA m7G-cap. May be a component of the RNA-induced silencing complex (RISC), a sequence-specific, multicomponent nuclease that destroys or silences messenger RNAs homologous to the silencing trigger.

It is found in the cytoplasm. Plays an essential role in growth and, with Dicer, also involved in microRNA (miRNA)-mediated translational repression. The RNA interference pathway is implicated in antigenic variation having a role in regulation of variant-specific surface protein (VSP)-coding gene expression. Several VSP genes are transcribed but only transcripts encoding the VSP to be expressed accumulate. Antisense RNAs corresponding to the silenced VSP genes are detected. The sequence is that of Protein argonaute from Giardia intestinalis (strain ATCC 50581 / GS clone H7) (Giardia lamblia).